Reading from the N-terminus, the 269-residue chain is Putative pyridoxine kinase (269 aa).

Asn-139 provides a ligand contact to ATP. Glu-142 provides a ligand contact to Mg(2+). ATP is bound by residues 176-180, Asp-189, Val-205, Gly-214, and Lys-239; that span reads KGGGR.

It belongs to the ThiD family.

The catalysed reaction is pyridoxal + ATP = pyridoxal 5'-phosphate + ADP + H(+). Phosphorylates B6 vitamers; functions in a salvage pathway. Uses pyridoxal, pyridoxine, and pyridoxamine as substrates. This chain is Putative pyridoxine kinase (pdxK), found in Treponema pallidum (strain Nichols).